The sequence spans 185 residues: Elongation factor P (185 aa).

It belongs to the elongation factor P family.

The protein resides in the cytoplasm. Its pathway is protein biosynthesis; polypeptide chain elongation. Involved in peptide bond synthesis. Stimulates efficient translation and peptide-bond synthesis on native or reconstituted 70S ribosomes in vitro. Probably functions indirectly by altering the affinity of the ribosome for aminoacyl-tRNA, thus increasing their reactivity as acceptors for peptidyl transferase. The sequence is that of Elongation factor P from Synechococcus sp. (strain JA-2-3B'a(2-13)) (Cyanobacteria bacterium Yellowstone B-Prime).